Reading from the N-terminus, the 930-residue chain is RNA-binding protein 10 (930 aa).

2 stretches are compositionally biased toward basic and acidic residues: residues 1-14 and 21-45; these read MEYERRGGRGDRTG and RSQDDSGENRSRDHDYRDMDYRSYP. The disordered stretch occupies residues 1-127; sequence MEYERRGGRG…EDEEEEEEKA (127 aa). A compositionally biased stretch (acidic residues) spans 59–70; that stretch reads DSSEEQSAEDSY. Residues Ser61 and Ser89 each carry the phosphoserine modification. Residues 80–89 are compositionally biased toward basic residues; it reads RRRRRRHRHS. Basic and acidic residues predominate over residues 98-111; the sequence is RDGDYRDQDYRTEQ. A compositionally biased stretch (acidic residues) spans 112 to 125; that stretch reads GEEEEEEDEEEEEE. The RRM 1 domain maps to 129-209; that stretch reads NIVMLRMLPQ…QKVSMHYSDP (81 aa). The RanBP2-type zinc-finger motif lies at 212–242; sequence KINEDWLCNKCGVQNFKRREKCFKCGVPKSE. Positions 300–384 constitute an RRM 2 domain; it reads DTIILRNLNP…KTINVEFAKG (85 aa). At Lys383 the chain carries N6-acetyllysine. Disordered regions lie at residues 464–487, 503–522, 537–566, 620–646, and 712–753; these read GPGMTGTKGDPAGTGPEASLEAGA, APGLYQQSAEGSSGQSTATN, ELQSPTQPSSSAFPPATSPTAPEAYSQYPV, EQSADGHKDTGASSKEGKEKKEKHKTK, and DLPK…EEKL. Positions 507 to 522 are enriched in polar residues; it reads YQQSAEGSSGQSTATN. Residues 540–562 are compositionally biased toward low complexity; the sequence is SPTQPSSSAFPPATSPTAPEAYS. A compositionally biased stretch (basic and acidic residues) spans 623-639; that stretch reads ADGHKDTGASSKEGKEK. Residues Ser718, Ser723, Ser733, Ser736, and Ser738 each carry the phosphoserine modification. Over residues 743-753 the composition is skewed to basic and acidic residues; the sequence is ERGGPEREEKL. A C2H2-type; atypical zinc finger spans residues 759–784; sequence LACLLCRRQFPSKEALIRHQQLSGLH. A phosphoserine mark is found at Ser781, Ser797, and Ser845. The segment at 818-861 is disordered; sequence AAERREKYGIPEPPEPKRRKYGGISTASVDFEQPTRDGLGSDNI. Residues 858 to 904 form the G-patch domain; it reads SDNIGSRMLQAMGWKEGSGLGRKKQGIVTPIEAQTRVRGSGLGARGS. The residue at position 902 (Arg902) is an Omega-N-methylarginine.

In terms of assembly, associates with the spliceosome. Component of a large chromatin remodeling complex, at least composed of MYSM1, PCAF, RBM10 and KIF11/TRIP5.

Its subcellular location is the nucleus. In terms of biological role, binds to ssRNA containing the consensus sequence 5'-AGGUAA-3'. May be involved in post-transcriptional processing, most probably in mRNA splicing. Binds to RNA homopolymers, with a preference for poly(G) and poly(U) and little for poly(A). May bind to specific miRNA hairpins. The sequence is that of RNA-binding protein 10 from Mus musculus (Mouse).